The primary structure comprises 362 residues: mRNA decay activator protein ZFP36L2 (362 aa).

A compositionally biased stretch (basic and acidic residues) spans 100–109 (SFSENGERSQ). The segment at 100–126 (SFSENGERSQHLLHLQQQQQQKAGAQV) is disordered. The span at 111–120 (LLHLQQQQQQ) shows a compositional bias: low complexity. Positions 130 to 135 (RYKTEL) match the RNA-binding motif. C3H1-type zinc fingers lie at residues 130 to 158 (RYKTELCRPFEESGACKYGEKCQFAHGFH) and 168 to 196 (KYKTELCRTFHTIGFCPYGPRCHFIHNAE). The RNA-binding stretch occupies residues 147-188 (YGEKCQFAHGFHELRSLTRHPKYKTELCRTFHTIGFCPYGPR). 2 disordered regions span residues 225-244 (DSPLLESPTSRTPPPQSSSS) and 306-362 (SESP…ISDD). The segment covering 327-346 (YLSGSLSSGSLSGSDSPTLD) has biased composition (low complexity).

Post-translationally, phosphorylated.

It localises to the nucleus. Its subcellular location is the cytoplasm. Zinc-finger RNA-binding protein that destabilizes several cytoplasmic AU-rich element (ARE)-containing mRNA transcripts by promoting their poly(A) tail removal or deadenylation, and hence provide a mechanism for attenuating protein synthesis. Acts as a 3'-untranslated region (UTR) ARE mRNA-binding adapter protein to communicate signaling events to the mRNA decay machinery. Functions by recruiting the CCR4-NOT deadenylase complex and probably other components of the cytoplasmic RNA decay machinery to the bound ARE-containing mRNAs, and hence promotes ARE-mediated mRNA deadenylation and decay processes. Binds to 3'-UTR ARE of numerous mRNAs. Also induces the degradation of ARE-containing mRNAs even in absence of poly(A) tail. Required for tubulogenesis during pronephros development. The chain is mRNA decay activator protein ZFP36L2 (zfp36l2) from Xenopus tropicalis (Western clawed frog).